We begin with the raw amino-acid sequence, 421 residues long: Testin (421 aa).

A PET domain is found at 92–199 (MILTNPVAAK…GDVKLPCEMD (108 aa)). A disordered region spans residues 133–164 (EKQPVAGSEGAQYRKKQLAKQLPAHDQDPSKC). Basic and acidic residues predominate over residues 155–164 (PAHDQDPSKC). LIM zinc-binding domains follow at residues 234 to 297 (YSCY…CDSE), 299 to 359 (PRCA…NHAV), and 362 to 421 (QGCH…KMMS).

Belongs to the prickle / espinas / testin family. In terms of assembly, interacts via LIM domain 1 with ZYX. Interacts (via LIM domain 3) with ENAH and VASP. Interacts with ALKBH4, talin, actin, alpha-actinin, GRIP1 and PXN. Interacts (via LIM domain 2) with ACTL7A (via N-terminus). Heterodimer with ACTL7A; the heterodimer interacts with ENAH to form a heterotrimer.

It is found in the cytoplasm. The protein localises to the cell junction. It localises to the focal adhesion. Its function is as follows. Scaffold protein that may play a role in cell adhesion, cell spreading and in the reorganization of the actin cytoskeleton. Plays a role in the regulation of cell proliferation. May act as a tumor suppressor. This chain is Testin (TES), found in Papio anubis (Olive baboon).